Reading from the N-terminus, the 927-residue chain is Perchlorate reductase subunit alpha (927 aa).

Residues 1–31 (MVQMTRRGFLLASGATLLGSSLSFRTLAAAA) constitute a signal peptide (tat-type signal). A 4Fe-4S Mo/W bis-MGD-type domain is found at 53-116 (DKKTRGAHLI…CAHDYMYGPH (64 aa)). [4Fe-4S] cluster contacts are provided by His60, Cys64, Cys68, and Cys102. Position 198 (Asp198) interacts with Mo-bis(molybdopterin guanine dinucleotide).

The protein belongs to the prokaryotic molybdopterin-containing oxidoreductase family. As to quaternary structure, heterotrimer of alpha, beta and gamma subunits. The cofactor is [4Fe-4S] cluster. It depends on Mo-bis(molybdopterin guanine dinucleotide) as a cofactor. In terms of processing, predicted to be exported by the Tat system. The position of the signal peptide cleavage has not been experimentally proven.

It localises to the periplasm. Its function is as follows. Component of the perchlorate reductase that catalyzes the reduction of perchlorate to chlorite and allows anaerobic growth on perchlorate as the sole electron acceptor. Is probably also able to reduce chlorate to chlorite. The alpha subunit is likely the catalytic subunit. In Dechloromonas aromatica (strain RCB), this protein is Perchlorate reductase subunit alpha (pcrA).